The sequence spans 700 residues: Polyribonucleotide nucleotidyltransferase (700 aa).

Residues Asp-487 and Asp-493 each contribute to the Mg(2+) site. The region spanning 554 to 613 (PRLLTIKIHPDKIRDVIGKGGSTIQAITKDTGTQIDIQDDGTIVIASVNNAAAREAKRRI) is the KH domain. Residues 623-691 (GRIYEGKVAK…KQGRIRLSIK (69 aa)) form the S1 motif domain.

Belongs to the polyribonucleotide nucleotidyltransferase family. Component of the RNA degradosome, which is a multiprotein complex involved in RNA processing and mRNA degradation. It depends on Mg(2+) as a cofactor.

The protein localises to the cytoplasm. It carries out the reaction RNA(n+1) + phosphate = RNA(n) + a ribonucleoside 5'-diphosphate. Involved in mRNA degradation. Catalyzes the phosphorolysis of single-stranded polyribonucleotides processively in the 3'- to 5'-direction. This chain is Polyribonucleotide nucleotidyltransferase, found in Xylella fastidiosa (strain M12).